The primary structure comprises 490 residues: GPI-anchored wall transfer protein 1 (490 aa).

Topologically, residues 1-19 are lumenal; that stretch reads MSTLKQRKEDFVTGLNGGS. A helical transmembrane segment spans residues 20–40; it reads ITEINAVTSIALVTYISWNLL. The Cytoplasmic portion of the chain corresponds to 41–54; it reads KNSNLMPPGISSVQ. A helical membrane pass occupies residues 55–75; the sequence is YIIDFALNWVALLLSITIYAS. Residue E76 is a topological domain, lumenal. A helical membrane pass occupies residues 77–97; that stretch reads PYLLNTLILLPCLLAFIYGKF. Residues 98 to 128 are Cytoplasmic-facing; the sequence is TSSSKPSNPIYNKKKMITQRFQLEKKPYITA. The chain crosses the membrane as a helical span at residues 129–149; the sequence is YRGGMLILTAIAILAVDFPIF. Topologically, residues 150 to 157 are lumenal; it reads PRRFAKVE. A helical transmembrane segment spans residues 158-178; sequence TWGTSLMDLGVGSFVFSNGIV. The Cytoplasmic portion of the chain corresponds to 179–199; that stretch reads SSRALLKNLSLKSKPSFLKNA. Residues 200 to 220 traverse the membrane as a helical segment; it reads FNALKSGGTLLFLGLLRLFFV. The Lumenal portion of the chain corresponds to 221-231; that stretch reads KNLEYQEHVTE. Residues 232-252 form a helical membrane-spanning segment; sequence YGVHWNFFITLSLLPLVLTFI. The Cytoplasmic segment spans residues 253–257; sequence DPVTR. The helical transmembrane segment at 258–278 threads the bilayer; that stretch reads MVPRCSIAIFISCIYEWLLLK. Residues 279–301 lie on the Lumenal side of the membrane; that stretch reads DDRTLNFLILADRNCFFSANREG. The chain crosses the membrane as a helical span at residues 302–322; the sequence is IFSFLGYCSIFLWGQNTGFYL. Topologically, residues 323 to 356 are cytoplasmic; sequence LGNKPTLNNLYKPSTQDVVAASKKSSTWDYWTSV. The helical transmembrane segment at 357 to 377 threads the bilayer; sequence TPLSGLCIWSTIFLVISQLVF. At 378-390 the chain is on the lumenal side; that stretch reads QYHPYSVSRRFAN. A helical transmembrane segment spans residues 391-411; it reads LPYTLWVITYNLLFLTGYCLT. Residues 412 to 435 are Cytoplasmic-facing; sequence DKIFGNSSEYYKVAECLESINSNG. A helical membrane pass occupies residues 436–456; sequence LFLFLLANVSTGLVNMSMVTI. Over 457 to 460 the chain is Lumenal; the sequence is DSSP. A helical transmembrane segment spans residues 461–481; it reads LKSFLVLLAYCSFIAVISVFL. Residues 482–490 are Cytoplasmic-facing; sequence YRKRIFIKL.

The protein belongs to the PIGW family.

The protein localises to the endoplasmic reticulum membrane. It participates in glycolipid biosynthesis; glycosylphosphatidylinositol-anchor biosynthesis. In terms of biological role, probable acetyltransferase, which acetylates the inositol ring of phosphatidylinositol during biosynthesis of GPI-anchor. Acetylation during GPI-anchor biosynthesis is not essential for the subsequent mannosylation and is usually removed soon after the attachment of GPIs to proteins. The sequence is that of GPI-anchored wall transfer protein 1 (GWT1) from Saccharomyces cerevisiae (strain ATCC 204508 / S288c) (Baker's yeast).